The chain runs to 328 residues: Delta-aminolevulinic acid dehydratase (328 aa).

Lysine 200 serves as the catalytic Schiff-base intermediate with substrate. 2 residues coordinate 5-aminolevulinate: arginine 210 and lysine 222. Residue glutamate 238 participates in Mg(2+) binding. Lysine 253 (schiff-base intermediate with substrate) is an active-site residue. 5-aminolevulinate is bound by residues serine 279 and tyrosine 318.

Belongs to the ALAD family. In terms of assembly, homooctamer.

It catalyses the reaction 2 5-aminolevulinate = porphobilinogen + 2 H2O + H(+). The protein operates within porphyrin-containing compound metabolism; protoporphyrin-IX biosynthesis; coproporphyrinogen-III from 5-aminolevulinate: step 1/4. Its activity is regulated as follows. Stimulated by magnesium, inhibited by zinc. Catalyzes an early step in the biosynthesis of tetrapyrroles. Binds two molecules of 5-aminolevulinate per subunit, each at a distinct site, and catalyzes their condensation to form porphobilinogen. In Chlorobaculum parvum (strain DSM 263 / NCIMB 8327) (Chlorobium vibrioforme subsp. thiosulfatophilum), this protein is Delta-aminolevulinic acid dehydratase (hemB).